Reading from the N-terminus, the 68-residue chain is ATP synthase subunit K, mitochondrial (68 aa).

A helical membrane pass occupies residues 15–31 (HQLAIGTLGLLGLLVVP).

Belongs to the ATP19 family. F-type ATPases have 2 components, CF(1) - the catalytic core - and CF(0) - the membrane proton channel. In yeast, the dimeric form of ATP synthase consists of 17 polypeptides: alpha, beta, gamma, delta, epsilon, 4 (B), 5 (OSCP), 6 (A), 8, 9 (C), d, E (Tim11), f, g, h, i/j and k.

The protein resides in the mitochondrion inner membrane. Functionally, mitochondrial membrane ATP synthase (F(1)F(0) ATP synthase or Complex V) produces ATP from ADP in the presence of a proton gradient across the membrane which is generated by electron transport complexes of the respiratory chain. F-type ATPases consist of two structural domains, F(1) - containing the extramembraneous catalytic core and F(0) - containing the membrane proton channel, linked together by a central stalk and a peripheral stalk. During catalysis, ATP synthesis in the catalytic domain of F(1) is coupled via a rotary mechanism of the central stalk subunits to proton translocation. Part of the complex F(0) domain. Minor subunit located with subunit a in the membrane. The K chain binds the dimeric form by interacting with the G and E chains. This is ATP synthase subunit K, mitochondrial (ATP19) from Saccharomyces cerevisiae (strain ATCC 204508 / S288c) (Baker's yeast).